The chain runs to 96 residues: UPF0235 protein YpsIP31758_0827 (96 aa).

This sequence belongs to the UPF0235 family.

The polypeptide is UPF0235 protein YpsIP31758_0827 (Yersinia pseudotuberculosis serotype O:1b (strain IP 31758)).